The sequence spans 1240 residues: MIENWPKKPEGSQWTDDQWKAVVANGRDILVAAAAGSGKTAVLVERIIKKIINEENPVDVDRLLVVTFTNAAAQEMKNRIGEALEKVLIDEPGSQHVRKQLSLLNKASISTIHSFCLQVIRGYYYMLDVDPRFRIANQTENELLKEEVLDDILEEEYGIEDNTIFFELVDRYTSDRSDDDLQRMILALHTESRAHPNPEKWLDKLVEAYDVEGKTIEDLVYASYLLEDVKFQLETAEQHIRKATELAMLPDGPAPRIETLQADLALFGTLSAAARESWTSVYEAMQNVSWQTLKRIKKSDYNEDIVKQVDSLRNKAKDEVKKLQEELFSRRPESFLRDFQDMHPVLEKLVQLVKVFTERFQAMKRDKGMVDFTDLEHFCLQILSEQSEDGEMKPSAVALQYRNKFAEVLVDEYQDTNFVQESIIKFVTKDSESEGNLFMVGDVKQSIYRFRLAEPGLFLGKYKRFTQEGLGGGMKIDLAKNFRSRHEVLAGTNFIFKQIMGEEVGEIDYDADAELKLGASYPEGEDVAAELLCIQQTEEVIDGEEGAEVEKAQLEARLMAQRIKAMVDSGYEVYDRKTDSMRPVQYRDFVILLRSMPWAPQIMEELKLQGIPVYADLATGYFEATEVNIMMNVFRVIDNPMQDIPLAAVLRSPIVGLNDEELATLRAHGKKGSFYEVMSSFLKGAPLEEEKELHDKLEWFYNLLQGWREFARQQSLSDLIWKVYGETGYYDFVGGLPAGKQRQANLRVLYDRARQYEATSFRGLFRFLRFIERILERGDDMGTARALGEQEDVVRIMTIHKSKGLEFPVVFVAGLGRRFNTQDLMKRFLLHKDFGFGSQFIDPRKRIKYTTLSQLAIKRKMKMELIAEEMRVLYVALTRAKEKLILIGTVKDATKEMEKWLDAREHSEWLLPDHVRAGASCYLDWIAPSLYRHRDSEMLLELGQGSIPDEIYGYDTSWKVEVVDGNTLLAPEPVQEEKQELLEALREKKAVPLESERKEEVYDRLMWKYRYGEATSHRAKQSVTEIKRNYQSEEGSDNAFIKKLRAPIRTRPRFMEKKGLTYAERGTAVHAVMQHVDLKKPITVEVLQEQIAGMVNKELLTFEQAEEIAVEKVISFFDSDLGKRVLAAKSVEREVPFTMMLAAEEAYQDWQGKSGESILVQGVIDCMIEEEDGITLIDFKTDTIEGKFPGGFEQAKPILEERYKVQLSLYAKALEKSLQHPVKEKCLYFFDGNHVIKVEE.

Positions 12-485 (SQWTDDQWKA…IDLAKNFRSR (474 aa)) constitute a UvrD-like helicase ATP-binding domain. 33–40 (AAAGSGKT) serves as a coordination point for ATP. Residues 497 to 804 (KQIMGEEVGE…RIMTIHKSKG (308 aa)) enclose the UvrD-like helicase C-terminal domain.

This sequence belongs to the helicase family. AddA subfamily. Heterodimer of AddA and AddB/RexB. Mg(2+) serves as cofactor.

The enzyme catalyses Couples ATP hydrolysis with the unwinding of duplex DNA by translocating in the 3'-5' direction.. It carries out the reaction ATP + H2O = ADP + phosphate + H(+). Its function is as follows. The heterodimer acts as both an ATP-dependent DNA helicase and an ATP-dependent, dual-direction single-stranded exonuclease. Recognizes the chi site generating a DNA molecule suitable for the initiation of homologous recombination. The AddA nuclease domain is required for chi fragment generation; this subunit has the helicase and 3' -&gt; 5' nuclease activities. This Bacillus cereus (strain AH820) protein is ATP-dependent helicase/nuclease subunit A.